Here is a 319-residue protein sequence, read N- to C-terminus: MALRGTVTDFSGFDGRADAEVLRKAMKGLGTDEDSILNLLTARSNAQRQQIAEEFKTLFGRDLVNDMKSELTGKFEKLIVALMKPSRLYDAYELKHALKGAGTDEKVLTEIIASRTPEELRAIKQAYEEEYGSNLEDDVVGDTSGYYQRMLVVLLQANRDPDTAIDDAQVELDAQALFQAGELKWGTDEEKFITILGTRSVSHLRRVFDKYMTISGFQIEETIDRETSGNLENLLLAVVKSIRSIPAYLAETLYYAMKGAGTDDHTLIRVIVSRSEIDLFNIRKEFRKNFATSLYSMIKGDTSGDYKKALLLLCGGEDD.

N-acetylalanine is present on alanine 2. Annexin repeat units lie at residues 13 to 84 (FDGR…ALMK), 85 to 156 (PSRL…VLLQ), 168 to 240 (AQVE…AVVK), and 244 to 315 (SIPA…LLCG). Lysine 27 is covalently cross-linked (Glycyl lysine isopeptide (Lys-Gly) (interchain with G-Cter in SUMO1); alternate). Lysine 27 participates in a covalent cross-link: Glycyl lysine isopeptide (Lys-Gly) (interchain with G-Cter in SUMO2); alternate. Serine 35 carries the phosphoserine modification. 5 positions are modified to N6-acetyllysine: lysine 68, lysine 74, lysine 77, lysine 95, and lysine 99. Lysine 288 carries the N6-succinyllysine modification. A [IL]-x-C-x-x-[DE] motif motif is present at residues 312-318 (LLCGGED).

This sequence belongs to the annexin family. Monomer. Binds ATRX, EIF5B and DNMT1. In terms of processing, S-nitrosylation is induced by interferon-gamma and oxidatively-modified low-densitity lipoprotein (LDL(ox)) possibly implicating the iNOS-S100A8/9 transnitrosylase complex.

This protein is an anticoagulant protein that acts as an indirect inhibitor of the thromboplastin-specific complex, which is involved in the blood coagulation cascade. In Rattus norvegicus (Rat), this protein is Annexin A5 (Anxa5).